Reading from the N-terminus, the 202-residue chain is Small ribosomal subunit protein uS5 (202 aa).

In terms of domain architecture, S5 DRBM spans 50-113 (LKQEILNINV…REAKLNLTPV (64 aa)).

It belongs to the universal ribosomal protein uS5 family. In terms of assembly, part of the 30S ribosomal subunit. Contacts protein S4.

Its function is as follows. With S4 and S12 plays an important role in translational accuracy. This Pyrobaculum islandicum (strain DSM 4184 / JCM 9189 / GEO3) protein is Small ribosomal subunit protein uS5.